Consider the following 191-residue polypeptide: Decorin-binding protein A (191 aa).

Positions 1–29 are cleaved as a signal peptide; the sequence is MIKCNNKTFNNLLKLTILVNLLISCGLTG.

Belongs to the decorin-binding protein family.

In terms of biological role, binds to decorin which may mediate the adherence of B.burgdorferi to collagen fibers in skin and other tissues. The polypeptide is Decorin-binding protein A (dbpA) (Borreliella burgdorferi (strain ATCC 35210 / DSM 4680 / CIP 102532 / B31) (Borrelia burgdorferi)).